The chain runs to 326 residues: DNA polymerase III subunit delta' (326 aa).

As to quaternary structure, DNA polymerase III contains a core (composed of alpha, epsilon and theta chains) that associates with a tau subunit. This core dimerizes to form the POLIII' complex. PolIII' associates with the gamma complex (composed of gamma, delta, delta', psi and chi chains) and with the beta chain to form the complete DNA polymerase III complex.

The catalysed reaction is DNA(n) + a 2'-deoxyribonucleoside 5'-triphosphate = DNA(n+1) + diphosphate. Functionally, DNA polymerase III is a complex, multichain enzyme responsible for most of the replicative synthesis in bacteria. This DNA polymerase also exhibits 3' to 5' exonuclease activity. The protein is DNA polymerase III subunit delta' (holB) of Buchnera aphidicola subsp. Acyrthosiphon pisum (strain APS) (Acyrthosiphon pisum symbiotic bacterium).